The sequence spans 78 residues: Large ribosomal subunit protein eL38 (78 aa).

It belongs to the eukaryotic ribosomal protein eL38 family.

The protein is Large ribosomal subunit protein eL38 (RpL38) of Maconellicoccus hirsutus (Pink hibiscus mealybug).